A 117-amino-acid polypeptide reads, in one-letter code: Cell division protein FtsB (117 aa).

Over 1-6 (MRDWRW) the chain is Cytoplasmic. A helical transmembrane segment spans residues 7 to 24 (MLLVLALLLGWLQYRFWF). The Periplasmic portion of the chain corresponds to 25 to 117 (GPGNSGEVMM…QVGEHPADVP (93 aa)). Residues 29 to 69 (SGEVMMLEAQVTNQERDNEGLQQRNDALAAEVKDLKEGQSA) adopt a coiled-coil conformation.

Belongs to the FtsB family. Part of a complex composed of FtsB, FtsL and FtsQ.

It localises to the cell inner membrane. Functionally, essential cell division protein. May link together the upstream cell division proteins, which are predominantly cytoplasmic, with the downstream cell division proteins, which are predominantly periplasmic. The sequence is that of Cell division protein FtsB from Stenotrophomonas maltophilia (strain R551-3).